The sequence spans 441 residues: tRNA-2-methylthio-N(6)-dimethylallyladenosine synthase (441 aa).

The 117-residue stretch at 5–121 (KKLYLETFGC…LQGMVAAAEE (117 aa)) folds into the MTTase N-terminal domain. Residues cysteine 14, cysteine 50, cysteine 84, cysteine 159, cysteine 163, and cysteine 166 each contribute to the [4Fe-4S] cluster site. The region spanning 145–375 (AEGGVTRFVT…QAAQKKTTLA (231 aa)) is the Radical SAM core domain. In terms of domain architecture, TRAM spans 378 to 440 (RSLEGTVQKV…QTLLKGEIVH (63 aa)).

The protein belongs to the methylthiotransferase family. MiaB subfamily. In terms of assembly, monomer. The cofactor is [4Fe-4S] cluster.

The protein localises to the cytoplasm. It carries out the reaction N(6)-dimethylallyladenosine(37) in tRNA + (sulfur carrier)-SH + AH2 + 2 S-adenosyl-L-methionine = 2-methylsulfanyl-N(6)-dimethylallyladenosine(37) in tRNA + (sulfur carrier)-H + 5'-deoxyadenosine + L-methionine + A + S-adenosyl-L-homocysteine + 2 H(+). Its function is as follows. Catalyzes the methylthiolation of N6-(dimethylallyl)adenosine (i(6)A), leading to the formation of 2-methylthio-N6-(dimethylallyl)adenosine (ms(2)i(6)A) at position 37 in tRNAs that read codons beginning with uridine. The protein is tRNA-2-methylthio-N(6)-dimethylallyladenosine synthase of Citrifermentans bemidjiense (strain ATCC BAA-1014 / DSM 16622 / JCM 12645 / Bem) (Geobacter bemidjiensis).